The sequence spans 131 residues: MEETVNKILRAQETRAQLYKELEDALNANQEKKIGLEQMGIIVQLVTEGLNEVSSDIRNYQASLTKELKLLVDSLQEKERSKLQATVKLEQLKVVSTNSPVENTQISELEARLSSLSKEINDILQNMKDEI.

As to quaternary structure, monomer.

Its subcellular location is the cytoplasm. The protein resides in the nucleus. Functionally, required for heterochromatin silencing within pericentromeric repeats and at telomers. Facilitates the recruitment of Clr6 histone deacetylase (HDAC) by interacting with histones. Also interacts with Rad25, which mediates heterochromatin silencing in DNA repeats by recruiting the RITS complex. Together with Rad25, forms a regulatory hub that defines heterochromatin silencing within tandem repeats via linking RNAi and HDAC. In Schizosaccharomyces pombe (strain 972 / ATCC 24843) (Fission yeast), this protein is Heterochromatin silencing protein rss1 (rss1).